Here is a 94-residue protein sequence, read N- to C-terminus: Neutrophil defensin 1 (94 aa).

A signal peptide spans 1 to 19 (MRTLAILAAILLVALQAQA). Positions 20–38 (EPLQARADEVAAAPEQIAA) are excised as a propeptide. 3 disulfide bridges follow: Cys66/Cys94, Cys68/Cys83, and Cys73/Cys93. Arg78 is modified (ADP-ribosylarginine; by ART1). Tyr85 is subject to Phosphotyrosine. An ADP-ribosylarginine; by ART1 modification is found at Arg88.

The protein belongs to the alpha-defensin family. In terms of assembly, tetramer. Dimer. Interacts with RETN. As to quaternary structure, (Microbial infection) Interacts with HIV-1 surface protein gp120. (Microbial infection) Interacts with herpes virus 1 (HHV1) envelope glycoprotein B; this interaction inhibits viral infection. Post-translationally, ADP-ribosylation drastically reduces cytotoxic and antibacterial activities, and enhances IL8 production. In terms of processing, phosphorylation at Tyr-85 has been found in some cancer cell lines, and interferes with ADP-ribosylation.

The protein localises to the secreted. Functionally, effector molecule of the innate immune system that acts via antibiotic-like properties against a broad array of infectious agents including bacteria, fungi, and viruses or by promoting the activation and maturation of some APCs. Interacts with the essential precursor of cell wall synthesis lipid II to inhibit bacterial cell wall synthesis. Inhibits adenovirus infection via inhibition of viral disassembly at the vertex region, thereby restricting the release of internal capsid protein pVI, which is required for endosomal membrane penetration during cell entry. In addition, interaction with adenovirus capsid leads to the redirection of viral particles to TLR4 thereby promoting a NLRP3-mediated inflammasome response and interleukin 1-beta (IL-1beta) release. Induces the production of proinflammatory cytokines including type I interferon (IFN) in plasmacytoid dendritic cells (pDCs) by triggering the degradation of NFKBIA and nuclear translocation of IRF1, both of which are required for activation of pDCs. In Homo sapiens (Human), this protein is Neutrophil defensin 1 (DEFA1).